The primary structure comprises 118 residues: MDTLNVKGIRAYGYTGYFDAEQFLGQWFEVDLTIWIDLAKAGQSDDLNDTLNYADAVAIVQKLIRESKFKMIEKLAEAIADAILGTGKTQQVKVALTKCQAPIPDFDGDVTLEILRSR.

Residues Glu-21, Tyr-53, and 72-73 each bind substrate; that span reads IE. The Proton donor/acceptor role is filled by Lys-98.

This sequence belongs to the DHNA family.

The catalysed reaction is 7,8-dihydroneopterin = 6-hydroxymethyl-7,8-dihydropterin + glycolaldehyde. It participates in cofactor biosynthesis; tetrahydrofolate biosynthesis; 2-amino-4-hydroxy-6-hydroxymethyl-7,8-dihydropteridine diphosphate from 7,8-dihydroneopterin triphosphate: step 3/4. Functionally, catalyzes the conversion of 7,8-dihydroneopterin to 6-hydroxymethyl-7,8-dihydropterin. The sequence is that of Probable dihydroneopterin aldolase (folB) from Synechocystis sp. (strain ATCC 27184 / PCC 6803 / Kazusa).